A 574-amino-acid polypeptide reads, in one-letter code: 5'-nucleotidase (574 aa).

Positions 1–26 (MNPGAARTPALRILALGALLWPAARP) are cleaved as a signal peptide. Asp36 and His38 together coordinate Zn(2+). Residues Cys51 and Cys57 are joined by a disulfide bond. An N-linked (GlcNAc...) asparagine glycan is attached at Asn53. Residues Asp85, Asn117, His220, and His243 each contribute to the Zn(2+) site. N-linked (GlcNAc...) asparagine glycans are attached at residues Asn311 and Asn333. 2 disulfide bridges follow: Cys353–Cys358 and Cys365–Cys387. Arg354 is a binding site for AMP. IMP is bound at residue Arg354. 2 residues coordinate AMP: Asn390 and Arg395. IMP is bound by residues Asn390 and Arg395. Asn403 carries an N-linked (GlcNAc...) asparagine glycan. Phe417 lines the AMP pocket. Phe417 provides a ligand contact to IMP. An intrachain disulfide couples Cys476 to Cys479. 2 residues coordinate AMP: Phe500 and Asp506. IMP contacts are provided by Phe500 and Asp506. Ser549 carries GPI-anchor amidated serine lipidation. The propeptide at 550-574 (AGSHCCGSFSLIFLSVLAVIIILYQ) is removed in mature form.

Belongs to the 5'-nucleotidase family. In terms of assembly, homodimer. The cofactor is Zn(2+).

It is found in the cell membrane. It carries out the reaction a ribonucleoside 5'-phosphate + H2O = a ribonucleoside + phosphate. The enzyme catalyses a 2'-deoxyribonucleoside 5'-phosphate + H2O = a 2'-deoxyribonucleoside + phosphate. The catalysed reaction is dTMP + H2O = thymidine + phosphate. It catalyses the reaction CMP + H2O = cytidine + phosphate. It carries out the reaction IMP + H2O = inosine + phosphate. The enzyme catalyses AMP + H2O = adenosine + phosphate. The catalysed reaction is GMP + H2O = guanosine + phosphate. It catalyses the reaction UMP + H2O = uridine + phosphate. It carries out the reaction dAMP + H2O = 2'-deoxyadenosine + phosphate. The enzyme catalyses dCMP + H2O = 2'-deoxycytidine + phosphate. Functionally, catalyzes the hydrolysis of nucleotide monophosphates, releasing inorganic phosphate and the corresponding nucleoside, with AMP being the preferred substrate. Shows a preference for ribonucleotide monophosphates over their equivalent deoxyribose forms. Other substrates include IMP, UMP, GMP, CMP, dAMP, dCMP, dTMP, NAD and NMN. This Bos taurus (Bovine) protein is 5'-nucleotidase (NT5E).